A 520-amino-acid chain; its full sequence is Developmental regulatory protein wetA (520 aa).

Composition is skewed to polar residues over residues 109 to 118 (TATHALSISP), 155 to 165 (QSFSPSLMRSS), and 378 to 392 (SSQKFDTSYTSSQVH). Disordered stretches follow at residues 109-165 (TATH…MRSS), 378-454 (SSQK…SNKS), and 468-496 (KKILTGVAPSGSSKTKARREQEARDRRRK). The segment covering 420-429 (PTHRRTHSRK) has biased composition (basic residues). A compositionally biased stretch (low complexity) spans 445–454 (SSSSRGSNKS).

This sequence belongs to the wetA family.

In terms of biological role, brlA, abaA and wetA are pivotal regulators of conidiophore development and conidium maturation. They act individually and together to regulate their own expression and that of numerous other sporulation-specific genes. This is Developmental regulatory protein wetA from Penicillium roqueforti (strain FM164).